The chain runs to 154 residues: Large ribosomal subunit protein uL23 (154 aa).

The disordered stretch occupies residues 1-39 (MAPAKADPSKKSDPKAQAAKVAKAVKSGSTLKKKSQKIR). Residues 15–26 (KAQAAKVAKAVK) show a composition bias toward low complexity.

The protein belongs to the universal ribosomal protein uL23 family.

This protein binds to a specific region on the 26S rRNA. In Nicotiana tabacum (Common tobacco), this protein is Large ribosomal subunit protein uL23 (RPL23A).